A 369-amino-acid chain; its full sequence is Probable dual-specificity RNA methyltransferase RlmN (369 aa).

E106 serves as the catalytic Proton acceptor. The 237-residue stretch at E118 to D354 folds into the Radical SAM core domain. The cysteines at positions 125 and 359 are disulfide-linked. [4Fe-4S] cluster contacts are provided by C132, C136, and C139. Residues G183 to E184, S215, S238 to H240, and N316 contribute to the S-adenosyl-L-methionine site. The S-methylcysteine intermediate role is filled by C359.

Belongs to the radical SAM superfamily. RlmN family. [4Fe-4S] cluster serves as cofactor.

The protein localises to the cytoplasm. It carries out the reaction adenosine(2503) in 23S rRNA + 2 reduced [2Fe-2S]-[ferredoxin] + 2 S-adenosyl-L-methionine = 2-methyladenosine(2503) in 23S rRNA + 5'-deoxyadenosine + L-methionine + 2 oxidized [2Fe-2S]-[ferredoxin] + S-adenosyl-L-homocysteine. It catalyses the reaction adenosine(37) in tRNA + 2 reduced [2Fe-2S]-[ferredoxin] + 2 S-adenosyl-L-methionine = 2-methyladenosine(37) in tRNA + 5'-deoxyadenosine + L-methionine + 2 oxidized [2Fe-2S]-[ferredoxin] + S-adenosyl-L-homocysteine. Functionally, specifically methylates position 2 of adenine 2503 in 23S rRNA and position 2 of adenine 37 in tRNAs. This chain is Probable dual-specificity RNA methyltransferase RlmN, found in Salinibacter ruber (strain DSM 13855 / M31).